A 158-amino-acid polypeptide reads, in one-letter code: NADH-quinone oxidoreductase subunit B 1 (158 aa).

The [4Fe-4S] cluster site is built by C37, C38, C102, and C132.

It belongs to the complex I 20 kDa subunit family. In terms of assembly, NDH-1 is composed of 14 different subunits. Subunits NuoB, C, D, E, F, and G constitute the peripheral sector of the complex. [4Fe-4S] cluster is required as a cofactor.

The protein resides in the cell inner membrane. It catalyses the reaction a quinone + NADH + 5 H(+)(in) = a quinol + NAD(+) + 4 H(+)(out). NDH-1 shuttles electrons from NADH, via FMN and iron-sulfur (Fe-S) centers, to quinones in the respiratory chain. Couples the redox reaction to proton translocation (for every two electrons transferred, four hydrogen ions are translocated across the cytoplasmic membrane), and thus conserves the redox energy in a proton gradient. In Azoarcus sp. (strain BH72), this protein is NADH-quinone oxidoreductase subunit B 1.